A 746-amino-acid chain; its full sequence is Hyperosmolality-gated Ca2+ permeable channel 2.1 (746 aa).

Transmembrane regions (helical) follow at residues 3–23 (ISAL…LLSL), 90–110 (MVIF…AFVL), 144–164 (LWVH…LLYF), 357–377 (IATL…VTFI), 405–425 (VITG…VPPL), 445–465 (ACIK…ILSG), 492–512 (AGFF…CEIM), 560–580 (VIAP…YLIY), 601–621 (IFHN…LGFF), and 623–643 (LKLS…TLLF). Positions 692–702 (LHSQKSSSKAE) are enriched in polar residues. A disordered region spans residues 692 to 723 (LHSQKSSSKAECSNPFKKQELPDPEKLKPEEG). A compositionally biased stretch (basic and acidic residues) spans 708 to 723 (KKQELPDPEKLKPEEG).

The protein belongs to the CSC1 (TC 1.A.17) family.

It localises to the membrane. In terms of biological role, acts as an osmosensitive calcium-permeable cation channel. This is Hyperosmolality-gated Ca2+ permeable channel 2.1 from Arabidopsis thaliana (Mouse-ear cress).